Here is a 66-residue protein sequence, read N- to C-terminus: U1-theraphotoxin-Cg1a 2 (66 aa).

A signal peptide spans 1–21; the sequence is MKTSALFVIFGLVLLFCNSFA. A propeptide spanning residues 22-29 is cleaved from the precursor; the sequence is AELEMTGR. Intrachain disulfides connect cysteine 31–cysteine 46, cysteine 38–cysteine 51, and cysteine 45–cysteine 58. At proline 63 the chain carries Proline amide.

It belongs to the neurotoxin 10 (Hwtx-1) family. 46 (Jztx-7/10/12) subfamily. As to expression, expressed by the venom gland.

The protein localises to the secreted. Functionally, probable ion channel inhibitor. The polypeptide is U1-theraphotoxin-Cg1a 2 (Chilobrachys guangxiensis (Chinese earth tiger tarantula)).